The following is a 264-amino-acid chain: Indole-3-glycerol phosphate synthase (264 aa).

It belongs to the TrpC family.

The enzyme catalyses 1-(2-carboxyphenylamino)-1-deoxy-D-ribulose 5-phosphate + H(+) = (1S,2R)-1-C-(indol-3-yl)glycerol 3-phosphate + CO2 + H2O. Its pathway is amino-acid biosynthesis; L-tryptophan biosynthesis; L-tryptophan from chorismate: step 4/5. The protein is Indole-3-glycerol phosphate synthase of Rhizorhabdus wittichii (strain DSM 6014 / CCUG 31198 / JCM 15750 / NBRC 105917 / EY 4224 / RW1) (Sphingomonas wittichii).